Here is a 162-residue protein sequence, read N- to C-terminus: Non-specific lipid transfer protein GPI-anchored 27 (162 aa).

The signal sequence occupies residues Met-1–Ala-29. Disulfide bonds link Cys-39-Cys-78, Cys-50-Cys-62, Cys-63-Cys-102, and Cys-76-Cys-110. Asn-68 carries N-linked (GlcNAc...) asparagine glycosylation. Asn-124 and Asn-135 each carry an N-linked (GlcNAc...) asparagine glycan. Ser-137 is lipidated: GPI-anchor amidated serine. Residues Val-138 to Phe-162 constitute a propeptide, removed in mature form.

It belongs to the plant LTP family.

Its subcellular location is the cell membrane. Functionally, probable lipid transfer protein. In Arabidopsis thaliana (Mouse-ear cress), this protein is Non-specific lipid transfer protein GPI-anchored 27.